Consider the following 241-residue polypeptide: Meiotically up-regulated gene 130 protein (241 aa).

Its subcellular location is the mitochondrion. In terms of biological role, has a role in meiosis. The protein is Meiotically up-regulated gene 130 protein (mug130) of Schizosaccharomyces pombe (strain 972 / ATCC 24843) (Fission yeast).